A 605-amino-acid polypeptide reads, in one-letter code: E3 ubiquitin-protein ligase synoviolin A (605 aa).

Residues 1–19 traverse the membrane as a helical segment; it reads MTGASLALTAAVVAHAYYL. Residues 20-35 are Lumenal-facing; sequence KNQFYPTVVYLTKSSP. The chain crosses the membrane as a helical span at residues 36 to 56; that stretch reads SMAVLYIQAFVLVFLLGKFMG. At 57-92 the chain is on the cytoplasmic side; the sequence is KVFFGQLRAAEMEHLLERSWYAVTETCLAFTVFRDD. The helical transmembrane segment at 93 to 113 threads the bilayer; the sequence is FSPRFVALFTLLLFLKCFHWL. Over 114-129 the chain is Lumenal; the sequence is AEDRVDFMERSPNISW. The chain crosses the membrane as a helical span at residues 130 to 150; that stretch reads LFHFRILALMLLLGVLDAFFV. Residues 151-163 are Cytoplasmic-facing; sequence SHAYHSLVIRGAS. Residues 164-184 traverse the membrane as a helical segment; it reads VQLVFGFEYAILMTVILTVFI. The Lumenal portion of the chain corresponds to 185-218; the sequence is KYILHSVDLQSENPWDNKAVYMLYTELFTGFIKV. A helical membrane pass occupies residues 219 to 239; it reads LLYVAFMTIMVKVHTFPLFAI. The interval 230 to 264 is interaction with p53/TP53; the sequence is KVHTFPLFAIRPMYLAMRQFKKAVTDAIMSRRAIR. Residues 240–605 are Cytoplasmic-facing; the sequence is RPMYLAMRQF…KLETGTTDSQ (366 aa). Positions 285, 288, 301, 303, 306, 309, 320, and 323 each coordinate Zn(2+). An RING-type; atypical zinc finger spans residues 285-324; the sequence is CIICREEMVTGAKRLPCNHIFHTSCLRSWFQRQQTCPTCR. Over residues 334 to 355 the composition is skewed to low complexity; the sequence is TQPQTPTEQQNQHQNQAQQQPT. The disordered stretch occupies residues 334–433; sequence TQPQTPTEQQ…QPGAALPGFP (100 aa). Pro residues predominate over residues 356-391; that stretch reads PVIPPQPNFPPGILPPFPPGMFPLWPPMGPFPPVPG. Positions 403-414 are enriched in low complexity; it reads PGSSSGSSPRPG. Polar residues predominate over residues 415 to 424; the sequence is ETSNVGSESQ. A coiled-coil region spans residues 465-496; the sequence is EELRAMEGHERQNLEARLQCLQNIHTLLDAAM. A disordered region spans residues 513–605; sequence QPPISSTSTS…KLETGTTDSQ (93 aa). Over residues 516–539 the composition is skewed to low complexity; sequence ISSTSTSTSSAASASTAPTTSNIS. Polar residues predominate over residues 546 to 555; that stretch reads DTTSTVTNTE. Over residues 556-579 the composition is skewed to low complexity; that stretch reads SSQQSAPPAPVSVETLSGAEGGET.

The protein belongs to the HRD1 family. In terms of assembly, homodimer.

The protein localises to the endoplasmic reticulum membrane. The catalysed reaction is S-ubiquitinyl-[E2 ubiquitin-conjugating enzyme]-L-cysteine + [acceptor protein]-L-lysine = [E2 ubiquitin-conjugating enzyme]-L-cysteine + N(6)-ubiquitinyl-[acceptor protein]-L-lysine.. The protein operates within protein modification; protein ubiquitination. Its function is as follows. E3 ubiquitin-protein ligase which accepts ubiquitin specifically from endoplasmic reticulum-associated UBC7 E2 ligase and transfers it to substrates, promoting their degradation. Component of the endoplasmic reticulum quality control (ERQC) system also called ER-associated degradation (ERAD) involved in ubiquitin-dependent degradation of misfolded endoplasmic reticulum proteins. Also promotes the degradation of normal but naturally short-lived proteins. Protects cells from ER stress-induced apoptosis. Sequesters p53 in the cytoplasm and promotes its degradation, thereby negatively regulating its biological function in transcription, cell cycle regulation and apoptosis. The chain is E3 ubiquitin-protein ligase synoviolin A (syvn1-a) from Xenopus laevis (African clawed frog).